A 276-amino-acid chain; its full sequence is Src-like-adapter (276 aa).

G2 is lipidated: N-myristoyl glycine. Positions 22 to 82 constitute an SH3 domain; that stretch reads LDSDFLAVLS…PGICVARVYH (61 aa). The 92-residue stretch at 84 to 175 folds into the SH2 domain; it reads WLFEGLGRDK…GLCCVLTTPC (92 aa). The tract at residues 212-276 is SLA C-terminal; sequence EGTENPLGVD…FFSSPPYFED (65 aa). S253 is subject to Phosphoserine. A Phosphotyrosine modification is found at Y273.

As to quaternary structure, interacts with EPHA2, VAV1, LCP2 and PDGFRB. Homodimer. Homodimerization and interaction with phosphorylated CBL occurs via its C-terminal domain. Interacts with phosphorylated proteins ZAP70, CD3Z, SYK and LAT via its SH2 domain. As to expression, expressed in lung and fetal brain. Weakly expressed in heart, adult brain, placenta, liver, skeletal muscle, kidney and pancreas.

Its subcellular location is the cytoplasm. The protein resides in the endosome. Its function is as follows. Adapter protein, which negatively regulates T-cell receptor (TCR) signaling. Inhibits T-cell antigen-receptor induced activation of nuclear factor of activated T-cells. Involved in the negative regulation of positive selection and mitosis of T-cells. May act by linking signaling proteins such as ZAP70 with CBL, leading to a CBL dependent degradation of signaling proteins. The sequence is that of Src-like-adapter (SLA) from Homo sapiens (Human).